Reading from the N-terminus, the 89-residue chain is Small ribosomal subunit protein uS15 (89 aa).

The segment covering 1–21 (MSITPERKQEMIKDYATKEGD) has biased composition (basic and acidic residues). Positions 1-23 (MSITPERKQEMIKDYATKEGDTG) are disordered.

This sequence belongs to the universal ribosomal protein uS15 family. In terms of assembly, part of the 30S ribosomal subunit. Forms a bridge to the 50S subunit in the 70S ribosome, contacting the 23S rRNA.

In terms of biological role, one of the primary rRNA binding proteins, it binds directly to 16S rRNA where it helps nucleate assembly of the platform of the 30S subunit by binding and bridging several RNA helices of the 16S rRNA. Functionally, forms an intersubunit bridge (bridge B4) with the 23S rRNA of the 50S subunit in the ribosome. The chain is Small ribosomal subunit protein uS15 from Rhodospirillum rubrum (strain ATCC 11170 / ATH 1.1.1 / DSM 467 / LMG 4362 / NCIMB 8255 / S1).